We begin with the raw amino-acid sequence, 285 residues long: 2-dehydro-3-deoxyphosphooctonate aldolase (285 aa).

The protein belongs to the KdsA family.

The protein resides in the cytoplasm. The enzyme catalyses D-arabinose 5-phosphate + phosphoenolpyruvate + H2O = 3-deoxy-alpha-D-manno-2-octulosonate-8-phosphate + phosphate. Its pathway is carbohydrate biosynthesis; 3-deoxy-D-manno-octulosonate biosynthesis; 3-deoxy-D-manno-octulosonate from D-ribulose 5-phosphate: step 2/3. It functions in the pathway bacterial outer membrane biogenesis; lipopolysaccharide biosynthesis. This Bordetella parapertussis (strain 12822 / ATCC BAA-587 / NCTC 13253) protein is 2-dehydro-3-deoxyphosphooctonate aldolase.